A 75-amino-acid polypeptide reads, in one-letter code: Mating pheromone Er-10 (75 aa).

An N-terminal signal peptide occupies residues 1-19; that stretch reads MNKLAILAIIAMVLFSANA. A propeptide spanning residues 20-37 is cleaved from the precursor; sequence FRFQSRIRSNVEAKTETR. 3 disulfides stabilise this stretch: Cys40–Cys56, Cys47–Cys74, and Cys52–Cys64.

As to quaternary structure, homodimer.

Its subcellular location is the secreted. Its function is as follows. Mating ciliate pheromones (or gamones) are diffusible extracellular communication signals that distinguish different intraspecific classes of cells commonly referred to as 'mating types'. They prepare the latter for conjugation by changing their cell surface properties. This Euplotes raikovi protein is Mating pheromone Er-10 (MAT10).